Reading from the N-terminus, the 445-residue chain is Ribosomal protein uS12 methylthiotransferase RimO (445 aa).

An MTTase N-terminal domain is found at 13–123; that stretch reads PRVGFVSLGC…VMAAIHHHLP (111 aa). Residues Cys-22, Cys-58, Cys-87, Cys-154, Cys-158, and Cys-161 each contribute to the [4Fe-4S] cluster site. Residues 140-377 form the Radical SAM core domain; sequence LTPKHYAYLK…MQQQEIISKQ (238 aa). One can recognise a TRAM domain in the interval 380 to 445; the sequence is AVKKGQQLRV…DIHDLWTEKI (66 aa).

This sequence belongs to the methylthiotransferase family. RimO subfamily. [4Fe-4S] cluster serves as cofactor.

The protein localises to the cytoplasm. The enzyme catalyses L-aspartate(89)-[ribosomal protein uS12]-hydrogen + (sulfur carrier)-SH + AH2 + 2 S-adenosyl-L-methionine = 3-methylsulfanyl-L-aspartate(89)-[ribosomal protein uS12]-hydrogen + (sulfur carrier)-H + 5'-deoxyadenosine + L-methionine + A + S-adenosyl-L-homocysteine + 2 H(+). Catalyzes the methylthiolation of an aspartic acid residue of ribosomal protein uS12. The protein is Ribosomal protein uS12 methylthiotransferase RimO of Nitrosomonas eutropha (strain DSM 101675 / C91 / Nm57).